The chain runs to 227 residues: MVLVRGGYKLEKFLQLLTVLLQEAKDPASLLKRLLTILVAVIIFLFVSNTSEVMSFLKTFSTSAVLQDVQTQRIDNFPNVAREKSMVLFSQTGADAVFVVKYKPDAINDYSNIIAWESNAQLDRADLADKAVNKTSELYRRHLEGFNYASDLTVKVNKYMGKNIPSFKNVIFNYIYTCPYFNLNNIYAGYIGIAWRDKPVDIADSEQFKEYLTKLCSPQQRSLGRSI.

Residues 1 to 33 are Cytoplasmic-facing; sequence MVLVRGGYKLEKFLQLLTVLLQEAKDPASLLKR. The helical; Signal-anchor for type II membrane protein transmembrane segment at 34 to 48 threads the bilayer; it reads LLTILVAVIIFLFVS. At 49–227 the chain is on the periplasmic side; that stretch reads NTSEVMSFLK…PQQRSLGRSI (179 aa). A disulfide bond links cysteine 178 and cysteine 216.

Belongs to the T4likevirus holin family. In terms of assembly, homomultimer. Heterotetramer composed of 2 holin and 2 antiholin. The holin-antiholin complex binds dsDNA. Interacts (via C-terminus) with antiholin (via C-terminus); this interaction blocks the holin homomultimerization and delays host cell lysis. Interacts (via N-terminus) with the lysis inhibition accessory protein rIII; this interaction stabilizes the holin-antiholin complex thereby resulting in a robust block of the hole formation. In terms of processing, disulfide bond is required for functionality.

The protein resides in the host cell inner membrane. Accumulates harmlessly in the cytoplasmic membrane until it reaches a critical concentration that triggers the formation of micron-scale pores (holes) causing host cell membrane disruption and endolysin escape into the periplasmic space. Determines the precise timing of host cell lysis. Regulated by specific antiholins that somehow sense superinfections and then delay lysis. Participates with the endolysin and spanin proteins in the sequential events which lead to the programmed host cell lysis releasing the mature viral particles from the host cell. The protein is Holin of Escherichia phage T5 (Enterobacteria phage T5).